Here is a 314-residue protein sequence, read N- to C-terminus: Malate dehydrogenase (314 aa).

NAD(+) contacts are provided by residues 12–17 (GAGFTG) and D36. Residues R87 and R93 each coordinate substrate. NAD(+) is bound by residues N100 and 123–125 (LTN). N125 is a substrate binding site. A Phosphoserine modification is found at S149. Residue R156 participates in substrate binding. The Proton acceptor role is filled by H180.

It belongs to the LDH/MDH superfamily. MDH type 3 family.

It carries out the reaction (S)-malate + NAD(+) = oxaloacetate + NADH + H(+). Catalyzes the reversible oxidation of malate to oxaloacetate. The chain is Malate dehydrogenase from Halalkalibacterium halodurans (strain ATCC BAA-125 / DSM 18197 / FERM 7344 / JCM 9153 / C-125) (Bacillus halodurans).